The sequence spans 443 residues: 3-isopropylmalate dehydratase large subunit (443 aa).

Positions 347, 407, and 410 each coordinate [4Fe-4S] cluster.

Belongs to the aconitase/IPM isomerase family. LeuC type 1 subfamily. As to quaternary structure, heterodimer of LeuC and LeuD. The cofactor is [4Fe-4S] cluster.

The enzyme catalyses (2R,3S)-3-isopropylmalate = (2S)-2-isopropylmalate. It participates in amino-acid biosynthesis; L-leucine biosynthesis; L-leucine from 3-methyl-2-oxobutanoate: step 2/4. Its function is as follows. Catalyzes the isomerization between 2-isopropylmalate and 3-isopropylmalate, via the formation of 2-isopropylmaleate. This chain is 3-isopropylmalate dehydratase large subunit, found in Buchnera aphidicola subsp. Uroleucon sonchi.